The sequence spans 99 residues: Putative membrane protein insertion efficiency factor (99 aa).

It belongs to the UPF0161 family.

It is found in the cell membrane. Its function is as follows. Could be involved in insertion of integral membrane proteins into the membrane. The sequence is that of Putative membrane protein insertion efficiency factor from Corynebacterium efficiens (strain DSM 44549 / YS-314 / AJ 12310 / JCM 11189 / NBRC 100395).